The chain runs to 639 residues: Threonine--tRNA ligase (639 aa).

Residues 1-61 enclose the TGS domain; that stretch reads MIHITLPDGS…TQDSPLSIVT (61 aa). The catalytic stretch occupies residues 242-533; it reads DHRKLGRELD…LIEEHAGALP (292 aa). Zn(2+) is bound by residues cysteine 333, histidine 384, and histidine 510.

It belongs to the class-II aminoacyl-tRNA synthetase family. In terms of assembly, homodimer. Zn(2+) is required as a cofactor.

It is found in the cytoplasm. It catalyses the reaction tRNA(Thr) + L-threonine + ATP = L-threonyl-tRNA(Thr) + AMP + diphosphate + H(+). Functionally, catalyzes the attachment of threonine to tRNA(Thr) in a two-step reaction: L-threonine is first activated by ATP to form Thr-AMP and then transferred to the acceptor end of tRNA(Thr). Also edits incorrectly charged L-seryl-tRNA(Thr). The protein is Threonine--tRNA ligase of Acidovorax sp. (strain JS42).